Consider the following 1052-residue polypeptide: MAKVPITLVMIIAIVSAAADLGCDYGHHRCYIDVTVENSPRQRHLLSDMDITLQCVRPMAKWFYEDKFQLRATLLRLERAQSGNSGNYGCLDSQNRWYNISLVVGHKEPVGNDIASFVKLEDAPALPESDLFFQPLNESRSLKLLQPLPKTVQRTAGGLFQLNCSPMDPDAKGVNISWLHNDTQILGGRGRIKLKRWSLTVGQLQPEDAGSYHCELCVEQDCQRSNPTQLEVISRKHTVPMLKPGYPRNTSIALGDNVSIECLLEDSALEPKITWLHKGNADNIDDLLQRLREQSQLPVDVTRLITRMDEPQVLRLGNVLMEDGGWYICIAENQVGRTVAASYVDLYSPSDTTTVRTTTTTTVASPIPTASTGEDNDDDVENPAAEASGGVGPPVFRKELKRLQHSLSGNTVNLACPVYGKANITWTKDKKPLNRELGVYVQKNWTLRFVEATSEDSGLYNCKVCNAWGCIQFDFSVQINDRTRSAPIIVVPQNQTVKVNGSLVMKCTVYSDLHPTVSWKRVVLKNASLDGLKSVEIQNLNFTVTNDSVVLTLRNVTFDQEGWYTCLASSGLGRSNSSVYLRVVSPLPPLEIYALLHAHPLGFTLAAITIVALFLLGSAFITFMLRRLRREKLLKLRIETVHQWTKKVIIYRPGGEEGSGCSSGDLQMPVIRIEKQRTTVSTTGTGGTDPAQGFNEYEFPLDSNWEIPRQQLSLGSILGEGAFGRVVMAEAEGLPRSPQLAETIVAVKMVKEEHTDTDMASLVREMEVMKMIGKHINIINLLGCCSQGGPLWVIVEYAPHGNLKDFLKQNRPGAPQRRSDSDGYLDDKPLISTQHLGEKELTKFAFQIARGMEYLASRRCIHRDLAARNVLVSDGYVMKIADFGLARDIQDTEYYRKNTNGRLPIKWMAPESLQEKKYDSQSDVWSYGVLLWEIMTYGDQPYPHILSAEELYSYLITGQRMEKPAKCSLNIYVVMRQCWHFESCARPTFAELVESFDGILQQASSNPNDAYLDLSMPMLETPPSSGDEDDGSDTETFRETSPLRYQYTYKFN.

A signal peptide spans Met1 to Ala19. Over Asp20–Pro600 the chain is Extracellular. Ig-like C2-type domains are found at residues Cys23–Phe117, Pro124–Leu230, and Pro240–Ala340. An intrachain disulfide couples Cys30 to Cys90. Asn99, Asn137, Asn175, Asn181, Asn249, and Asn257 each carry an N-linked (GlcNAc...) asparagine glycan. Cys164 and Cys217 are joined by a disulfide. Cys262 and Cys329 are disulfide-bonded. Residues Thr358–Thr372 are compositionally biased toward low complexity. The interval Thr358–Pro393 is disordered. 2 Ig-like C2-type domains span residues Pro393–Gln478 and Pro487–Ser585. A disulfide bond links Cys416 and Cys462. Asn423, Asn444, Asn494, Asn500, Asn526, Asn541, Asn546, Asn555, and Asn576 each carry an N-linked (GlcNAc...) asparagine glycan. The cysteines at positions 507 and 566 are disulfide-linked. The helical transmembrane segment at Leu601–Arg626 threads the bilayer. Residues Arg627–Asn1052 lie on the Cytoplasmic side of the membrane. The Protein kinase domain maps to Leu712–Leu1000. Residues Leu718–Val726 and Lys748 contribute to the ATP site. The active-site Proton acceptor is Asp864. Residue Tyr895 is modified to Phosphotyrosine; by autocatalysis. The segment at Pro1017–Arg1038 is disordered.

Belongs to the protein kinase superfamily. Tyr protein kinase family. Fibroblast growth factor receptor subfamily. During embryogenesis, expression is seen in mesoderm, endodermal precursor cells, CNS midline cells and trachea and salivary duct ectodermal cells.

The protein resides in the membrane. It carries out the reaction L-tyrosyl-[protein] + ATP = O-phospho-L-tyrosyl-[protein] + ADP + H(+). Functionally, may be required for patterning of muscle precursor cells: generation of mesodermal and endodermal layers, invaginations of various types of cells, and CNS formation. Essential for the ability of the migrating tracheal and midline cells to recognize external guiding cues. This chain is Fibroblast growth factor receptor homolog 2 (btl), found in Drosophila melanogaster (Fruit fly).